The primary structure comprises 124 residues: MSTLYEKLGGTTAVDLAVDKFYERVLQDDRIKHFFADVDMAKQRAHQKAFLTYAFGGTDKYDGRYMREAHKELVENHGLNGEHFDAVAEDLLATLKEMGVPEDLIAEVAAVAGAPAHKRDVLNQ.

Residues H46, H70, and H117 each coordinate heme.

The protein belongs to the truncated hemoglobin family. Group I subfamily. In terms of assembly, monomer. The cofactor is heme.

Its function is as follows. Forms a very stable complex with oxygen. The oxygen dissociation rate is 0.011 sec(-1). The protein is Group 1 truncated hemoglobin GlbN (glbN) of Synechocystis sp. (strain ATCC 27184 / PCC 6803 / Kazusa).